The sequence spans 315 residues: Atrochrysone carboxyl ACP thioesterase (315 aa).

Zn(2+)-binding residues include His-95, His-97, Asp-99, and His-100. The Proton donor/acceptor role is filled by Asp-99.

It belongs to the metallo-beta-lactamase superfamily. Zn(2+) serves as cofactor. Endocrocin is specifically produced in conidia.

The enzyme catalyses atrochrysone carboxyl-[ACP] + H2O = atrochrysone carboxylate + holo-[ACP] + H(+). In terms of biological role, atrochrysone carboxyl ACP thioesterase; part of the gene cluster that mediates the biosynthesis of endocrocin, a simple anthraquinone interesting for many biotechnological applications. The pathway begins with the synthesis of atrochrysone thioester by the polyketide synthase (PKS) encA. The atrochrysone carboxyl ACP thioesterase encB then breaks the thioester bond and releases the atrochrysone carboxylic acid from encA. The atrochrysone carboxylic acid is then converted to endocrocin anthrone which is further oxidized into endocrocin by the anthrone oxygenase encC. The exact function of encD has not been identified yet, but it negatively regulates endocrocin production, likely through the modification of endocrocin itself. This Aspergillus fumigatus (strain ATCC MYA-4609 / CBS 101355 / FGSC A1100 / Af293) (Neosartorya fumigata) protein is Atrochrysone carboxyl ACP thioesterase.